The primary structure comprises 469 residues: UDP-N-acetylmuramate--L-alanine ligase (469 aa).

G118–T124 is a binding site for ATP.

The protein belongs to the MurCDEF family.

The protein resides in the cytoplasm. It catalyses the reaction UDP-N-acetyl-alpha-D-muramate + L-alanine + ATP = UDP-N-acetyl-alpha-D-muramoyl-L-alanine + ADP + phosphate + H(+). Its pathway is cell wall biogenesis; peptidoglycan biosynthesis. Its function is as follows. Cell wall formation. The protein is UDP-N-acetylmuramate--L-alanine ligase of Ruegeria sp. (strain TM1040) (Silicibacter sp.).